We begin with the raw amino-acid sequence, 210 residues long: Thiamine-phosphate synthase (210 aa).

Residues 39–43 (QLREK) and asparagine 71 contribute to the 4-amino-2-methyl-5-(diphosphooxymethyl)pyrimidine site. Positions 72 and 91 each coordinate Mg(2+). Serine 110 serves as a coordination point for 4-amino-2-methyl-5-(diphosphooxymethyl)pyrimidine. 136-138 (TST) provides a ligand contact to 2-[(2R,5Z)-2-carboxy-4-methylthiazol-5(2H)-ylidene]ethyl phosphate. Lysine 139 is a binding site for 4-amino-2-methyl-5-(diphosphooxymethyl)pyrimidine. Residues glycine 166 and 186-187 (VS) contribute to the 2-[(2R,5Z)-2-carboxy-4-methylthiazol-5(2H)-ylidene]ethyl phosphate site.

It belongs to the thiamine-phosphate synthase family. Mg(2+) serves as cofactor.

The catalysed reaction is 2-[(2R,5Z)-2-carboxy-4-methylthiazol-5(2H)-ylidene]ethyl phosphate + 4-amino-2-methyl-5-(diphosphooxymethyl)pyrimidine + 2 H(+) = thiamine phosphate + CO2 + diphosphate. It carries out the reaction 2-(2-carboxy-4-methylthiazol-5-yl)ethyl phosphate + 4-amino-2-methyl-5-(diphosphooxymethyl)pyrimidine + 2 H(+) = thiamine phosphate + CO2 + diphosphate. It catalyses the reaction 4-methyl-5-(2-phosphooxyethyl)-thiazole + 4-amino-2-methyl-5-(diphosphooxymethyl)pyrimidine + H(+) = thiamine phosphate + diphosphate. It functions in the pathway cofactor biosynthesis; thiamine diphosphate biosynthesis; thiamine phosphate from 4-amino-2-methyl-5-diphosphomethylpyrimidine and 4-methyl-5-(2-phosphoethyl)-thiazole: step 1/1. In terms of biological role, condenses 4-methyl-5-(beta-hydroxyethyl)thiazole monophosphate (THZ-P) and 2-methyl-4-amino-5-hydroxymethyl pyrimidine pyrophosphate (HMP-PP) to form thiamine monophosphate (TMP). In Ruminiclostridium cellulolyticum (strain ATCC 35319 / DSM 5812 / JCM 6584 / H10) (Clostridium cellulolyticum), this protein is Thiamine-phosphate synthase.